Here is a 66-residue protein sequence, read N- to C-terminus: MKIFFFIFAALILLAQIFQARTAIHRALICKRMEGHCEAECLTFEVKIGGCRAELTPYCCKKRKKD.

The N-terminal stretch at 1–22 (MKIFFFIFAALILLAQIFQART) is a signal peptide. 2 disulfide bridges follow: C37–C51 and C41–C60.

Belongs to the beta-defensin family.

It is found in the secreted. In terms of biological role, has antibacterial activity. The sequence is that of Beta-defensin 107A (DEFB107A) from Macaca fascicularis (Crab-eating macaque).